The primary structure comprises 1082 residues: RNA-directed RNA polymerase (1082 aa).

The 173-residue stretch at 498 to 670 (LSYGDVTRYL…ALASLTGCEI (173 aa)) folds into the RdRp catalytic domain.

The protein belongs to the reoviridae RNA-directed RNA polymerase family. In terms of assembly, interacts with VP3 (Potential). Interacts with VP2; this interaction activates VP1. Interacts with NSP5; this interaction is probably necessary for the formation of functional virus factories. Interacts with NSP2; this interaction is weak. The cofactor is Mg(2+).

It is found in the virion. It carries out the reaction RNA(n) + a ribonucleoside 5'-triphosphate = RNA(n+1) + diphosphate. RNA-directed RNA polymerase that is involved in both transcription and genome replication. Together with VP3 capping enzyme, forms an enzyme complex positioned near the channels situated at each of the five-fold vertices of the core. Following infection, the outermost layer of the virus is lost, leaving a double-layered particle (DLP) made up of the core and VP6 shell. VP1 then catalyzes the transcription of fully conservative plus-strand genomic RNAs that are extruded through the DLP's channels into the cytoplasm where they function as mRNAs for translation of viral proteins. One copy of each of the viral (+)RNAs is also recruited during core assembly, together with newly synthesized polymerase complexes and VP2. The polymerase of these novo-formed particles catalyzes the synthesis of complementary minus-strands leading to dsDNA formation. To do so, the polymerase specifically recognizes conserved 3' sequence(s) in plus-strand RNA templates. Once dsRNA synthesis is complete, the polymerase switches to the transcriptional mode, thus providing secondary transcription. The chain is RNA-directed RNA polymerase from Rotavirus C (strain RVC/Pig/United States/Cowden/1980) (RV-C).